The primary structure comprises 201 residues: Small ribosomal subunit protein uS4 (201 aa).

The region spanning 91–154 is the S4 RNA-binding domain; it reads TRLDNVVYRA…RKMEWFEEAQ (64 aa).

The protein belongs to the universal ribosomal protein uS4 family. Part of the 30S ribosomal subunit. Contacts protein S5. The interaction surface between S4 and S5 is involved in control of translational fidelity.

In terms of biological role, one of the primary rRNA binding proteins, it binds directly to 16S rRNA where it nucleates assembly of the body of the 30S subunit. Its function is as follows. With S5 and S12 plays an important role in translational accuracy. The sequence is that of Small ribosomal subunit protein uS4 from Corynebacterium ammoniagenes (Brevibacterium ammoniagenes).